The following is a 230-amino-acid chain: Flagellar L-ring protein (230 aa).

Residues 1–26 form the signal peptide; sequence MKQVRLLPSATVRAACAVAVAAFAAG. A lipid anchor (N-palmitoyl cysteine) is attached at C27. C27 is lipidated: S-diacylglycerol cysteine.

It belongs to the FlgH family. As to quaternary structure, the basal body constitutes a major portion of the flagellar organelle and consists of four rings (L,P,S, and M) mounted on a central rod.

Its subcellular location is the cell outer membrane. The protein resides in the bacterial flagellum basal body. Functionally, assembles around the rod to form the L-ring and probably protects the motor/basal body from shearing forces during rotation. This chain is Flagellar L-ring protein, found in Burkholderia lata (strain ATCC 17760 / DSM 23089 / LMG 22485 / NCIMB 9086 / R18194 / 383).